Consider the following 144-residue polypeptide: Large ribosomal subunit protein uL15 (144 aa).

The tract at residues methionine 1–glutamine 54 is disordered. Gly residues predominate over residues arginine 21–glycine 31.

It belongs to the universal ribosomal protein uL15 family. In terms of assembly, part of the 50S ribosomal subunit.

In terms of biological role, binds to the 23S rRNA. This is Large ribosomal subunit protein uL15 from Salmonella enteritidis PT4 (strain P125109).